A 594-amino-acid chain; its full sequence is Bifunctional lycopene cyclase/phytoene synthase (594 aa).

The lycopene beta-cyclase stretch occupies residues 1 to 249; the sequence is MGLDYLMVHV…VVFGIAAMHN (249 aa). 7 helical membrane passes run 3–23, 35–55, 77–97, 130–150, 153–173, 176–196, and 227–247; these read LDYL…LTIL, KIVL…SYLI, LEEV…YIIF, LGTL…YIGG, MYLG…WVLM, FLLA…TLYL, and IEEA…IAAM. The tract at residues 256 to 594 is phytoene synthase; it reads YKAFISTTAM…RFKRAWLAML (339 aa).

This sequence in the N-terminal section; belongs to the lycopene beta-cyclase family. The protein in the C-terminal section; belongs to the phytoene/squalene synthase family.

It is found in the membrane. The enzyme catalyses all-trans-lycopene = gamma-carotene. It carries out the reaction gamma-carotene = all-trans-beta-carotene. The catalysed reaction is 2 (2E,6E,10E)-geranylgeranyl diphosphate = 15-cis-phytoene + 2 diphosphate. It functions in the pathway carotenoid biosynthesis; beta-carotene biosynthesis. The protein operates within carotenoid biosynthesis; phytoene biosynthesis; all-trans-phytoene from geranylgeranyl diphosphate: step 1/1. Bifunctional enzyme that catalyzes the reactions from geranylgeranyl diphosphate to phytoene (phytoene synthase) and lycopene to beta-carotene via the intermediate gamma-carotene (lycopene cyclase). This chain is Bifunctional lycopene cyclase/phytoene synthase, found in Arthroderma gypseum (strain ATCC MYA-4604 / CBS 118893) (Microsporum gypseum).